Consider the following 370-residue polypeptide: Probable dual-specificity RNA methyltransferase RlmN (370 aa).

Catalysis depends on Glu-91, which acts as the Proton acceptor. In terms of domain architecture, Radical SAM core spans 97 to 329 (QHYGLSVCVT…KKNGVNCVVR (233 aa)). A disulfide bridge connects residues Cys-104 and Cys-340. [4Fe-4S] cluster-binding residues include Cys-111, Cys-115, and Cys-118. S-adenosyl-L-methionine-binding positions include 163 to 164 (GE), Ser-195, 218 to 220 (SLH), and Asn-296. The S-methylcysteine intermediate role is filled by Cys-340.

This sequence belongs to the radical SAM superfamily. RlmN family. The cofactor is [4Fe-4S] cluster.

It is found in the cytoplasm. The enzyme catalyses adenosine(2503) in 23S rRNA + 2 reduced [2Fe-2S]-[ferredoxin] + 2 S-adenosyl-L-methionine = 2-methyladenosine(2503) in 23S rRNA + 5'-deoxyadenosine + L-methionine + 2 oxidized [2Fe-2S]-[ferredoxin] + S-adenosyl-L-homocysteine. The catalysed reaction is adenosine(37) in tRNA + 2 reduced [2Fe-2S]-[ferredoxin] + 2 S-adenosyl-L-methionine = 2-methyladenosine(37) in tRNA + 5'-deoxyadenosine + L-methionine + 2 oxidized [2Fe-2S]-[ferredoxin] + S-adenosyl-L-homocysteine. Specifically methylates position 2 of adenine 2503 in 23S rRNA and position 2 of adenine 37 in tRNAs. This chain is Probable dual-specificity RNA methyltransferase RlmN, found in Streptococcus suis (strain 98HAH33).